The following is a 185-amino-acid chain: Putative gustatory receptor clone PTE01 (185 aa).

Residues 1–11 (MYLFLSNLSLA) form a helical membrane-spanning segment. Residues 12-42 (DISFTSTTLPKMIVDIQTNNRAISYSGCLTQ) are Extracellular-facing. Residues 43-62 (MSFFMLFGCLDSLLLTAMAY) form a helical membrane-spanning segment. Topologically, residues 63-84 (DRFVAICHPLHYQVIMNPRLCG) are cytoplasmic. A helical membrane pass occupies residues 85–105 (LLVFLSILISLLVSQLHNSVV). Residues 106-138 (LQLTYFKSVDISHFFCDPSLLLNLACSDTFTNN) lie on the Extracellular side of the membrane. A helical membrane pass occupies residues 139–160 (IVMYFVGAISGFLPISGIFFSY). The Cytoplasmic segment spans residues 161–182 (YKIVSSILRMPSPGGKYKAFST). The helical transmembrane segment at 183–185 (CGS) threads the bilayer.

It belongs to the G-protein coupled receptor 1 family. Tongue specific.

It localises to the cell membrane. Its function is as follows. Possible taste receptor. This chain is Putative gustatory receptor clone PTE01, found in Rattus norvegicus (Rat).